The chain runs to 545 residues: ATP synthase subunit alpha (545 aa).

172 to 179 contacts ATP; it reads GDRKTGKT. The tract at residues 511-545 is disordered; it reads FQTTDGTPVINEPEARPLGDDEVTKSQITVSRKTQ. Basic and acidic residues predominate over residues 523–534; that stretch reads PEARPLGDDEVT. The span at 535–545 shows a compositional bias: polar residues; the sequence is KSQITVSRKTQ.

This sequence belongs to the ATPase alpha/beta chains family. As to quaternary structure, F-type ATPases have 2 components, CF(1) - the catalytic core - and CF(0) - the membrane proton channel. CF(1) has five subunits: alpha(3), beta(3), gamma(1), delta(1), epsilon(1). CF(0) has three main subunits: a(1), b(2) and c(9-12). The alpha and beta chains form an alternating ring which encloses part of the gamma chain. CF(1) is attached to CF(0) by a central stalk formed by the gamma and epsilon chains, while a peripheral stalk is formed by the delta and b chains.

Its subcellular location is the cell membrane. It carries out the reaction ATP + H2O + 4 H(+)(in) = ADP + phosphate + 5 H(+)(out). Its function is as follows. Produces ATP from ADP in the presence of a proton gradient across the membrane. The alpha chain is a regulatory subunit. The sequence is that of ATP synthase subunit alpha from Corynebacterium jeikeium (strain K411).